A 394-amino-acid chain; its full sequence is DNA repair protein brc-2 (394 aa).

A compositionally biased stretch (basic and acidic residues) spans 1 to 12; the sequence is MGDSSKKVKDSF. 2 disordered regions span residues 1–30 and 56–136; these read MGDS…VPIS and MLNS…EKKK. The interval 1-60 is interaction with rad-51; it reads MGDSSKKVKDSFDTISEPDSFDEPKGVPISMEPVFSTAAGIRIDVKQESIDKSKKMLNSD. Positions 28-62 are BRCA2 repeat-like region; sequence PISMEPVFSTAAGIRIDVKQESIDKSKKMLNSDLK. Over residues 56-73 the composition is skewed to low complexity; the sequence is MLNSDLKSKSSSKGGFSS. An interaction with rad-51-DNA complexes region spans residues 60–89; that stretch reads DLKSKSSSKGGFSSPLVRKNNGSSAFVSPF. Residues 124 to 134 are compositionally biased toward basic residues; that stretch reads KKSKKHSKKEK. Residues 371–389 are required for ssDNA binding; sequence WKDFGSYLKHKEDKKKRRS.

Interacts (via N-terminus) with rad-51; regulates rad-51 recruitment to sites of DNA double strand breaks. In terms of tissue distribution, expressed in the germline, with highest expression in cells undergoing oogenesis.

It is found in the nucleus. Its subcellular location is the chromosome. Its function is as follows. Required for the homologous recombination repair of DNA double strand breaks, thereby playing a role in chromosome integrity. Acts by targeting rad-51 to sites of DNA damage and stabilizing rad-51-DNA filaments by blocking ATP hydrolysis catalyzed by rad-51. Promotes rad-51 mediated displacement-loop (D-loop) formation during strand invasion between the invading single-stranded DNA (ssDNA) and the homologous duplex DNA. Also functions independently of rad-51 in DNA double-strand break (DSB) repair by promoting DNA single-strand annealing (SSA) when the homologous recombination (HR) and non-homologous end joining (NHEJ) pathways are compromised. Binds selectively to single-stranded (ssDNA) via its C-terminus. Involved in telomere maintenance and replicative senescence. This Caenorhabditis elegans protein is DNA repair protein brc-2.